We begin with the raw amino-acid sequence, 220 residues long: NADH-quinone oxidoreductase subunit B (220 aa).

[4Fe-4S] cluster is bound by residues C37, C38, C103, and C132. The interval 174–220 (PSSERYAPKNRSQRKLAERQQAAQRREMGAEKPLGALEERAELNAGR) is disordered. A compositionally biased stretch (basic and acidic residues) spans 210–220 (LEERAELNAGR).

The protein belongs to the complex I 20 kDa subunit family. In terms of assembly, NDH-1 is composed of 14 different subunits. Subunits NuoB, C, D, E, F, and G constitute the peripheral sector of the complex. Requires [4Fe-4S] cluster as cofactor.

Its subcellular location is the cell membrane. It carries out the reaction a quinone + NADH + 5 H(+)(in) = a quinol + NAD(+) + 4 H(+)(out). Its function is as follows. NDH-1 shuttles electrons from NADH, via FMN and iron-sulfur (Fe-S) centers, to quinones in the respiratory chain. The immediate electron acceptor for the enzyme in this species is believed to be a menaquinone. Couples the redox reaction to proton translocation (for every two electrons transferred, four hydrogen ions are translocated across the cytoplasmic membrane), and thus conserves the redox energy in a proton gradient. The chain is NADH-quinone oxidoreductase subunit B from Saccharopolyspora erythraea (strain ATCC 11635 / DSM 40517 / JCM 4748 / NBRC 13426 / NCIMB 8594 / NRRL 2338).